The following is a 143-amino-acid chain: Large ribosomal subunit protein uL15 (143 aa).

Residues methionine 1 to glutamate 51 form a disordered region. Residues arginine 21–alanine 31 show a composition bias toward gly residues.

This sequence belongs to the universal ribosomal protein uL15 family. Part of the 50S ribosomal subunit.

Its function is as follows. Binds to the 23S rRNA. This chain is Large ribosomal subunit protein uL15, found in Thioalkalivibrio sulfidiphilus (strain HL-EbGR7).